Here is a 164-residue protein sequence, read N- to C-terminus: MACDQQAELRRVFELFDRDGDGRITREELTESLERLGMPVHREELAATIARIDANGDGCVDMDEFTQLYETVMRVDGGGGGGGGACDVDEASMREAFDVFDRNGDGFITVDELGAVLASLGIKQGRTAEDCGRMIGQVDRDGDGRVDFLEFKQMMRGGAFATLR.

4 consecutive EF-hand domains span residues 4–39, 40–75, 88–123, and 126–161; these read DQQA…LGMP, VHRE…VMRV, VDEA…LGIK, and RTAE…GAFA. Residues Asp17, Asp19, Asp21, Arg23, Glu28, Asp53, Asn55, Asp57, Cys59, Glu64, Asp101, Asn103, Asp105, Glu112, Asp139, Asp141, Asp143, Arg145, and Glu150 each coordinate Ca(2+).

Functionally, potential calcium sensor. The sequence is that of Probable calcium-binding protein CML17 (CML17) from Oryza sativa subsp. japonica (Rice).